The following is a 684-amino-acid chain: Agnestins biosynthesis cluster transcription factor AgnL11 (684 aa).

A DNA-binding region (zn(2)-C6 fungal-type) is located at residues 25–51; the sequence is CHFCRTKKLKCDRRFPCSNCRARRLSC. A coiled-coil region spans residues 76–103; that stretch reads NEELSENINELKARLQRLEELISVNAEE. Residues 601 to 644 form a disordered region; that stretch reads KGSASARKDKNPIHGDTDRATPPGSSNLPQHDKSSSSSPAPPVW. The segment covering 606 to 619 has biased composition (basic and acidic residues); the sequence is ARKDKNPIHGDTDR.

It is found in the nucleus. Transcription factor that regulates the expression of the gene cluster that mediates the biosynthesis of agnestins, dihydroxy-xanthone metabolites. The sequence is that of Agnestins biosynthesis cluster transcription factor AgnL11 from Paecilomyces divaricatus (Penicillium divaricatum).